A 133-amino-acid polypeptide reads, in one-letter code: Transcription antitermination protein NusB (133 aa).

Belongs to the NusB family.

In terms of biological role, involved in transcription antitermination. Required for transcription of ribosomal RNA (rRNA) genes. Binds specifically to the boxA antiterminator sequence of the ribosomal RNA (rrn) operons. This Shouchella clausii (strain KSM-K16) (Alkalihalobacillus clausii) protein is Transcription antitermination protein NusB.